A 401-amino-acid polypeptide reads, in one-letter code: tRNA(Met) cytidine acetate ligase (401 aa).

Residues 7-20 (IVEYNPFHNGHLYH), G101, N160, and 185-186 (RI) each bind ATP.

The protein belongs to the TmcAL family.

The protein localises to the cytoplasm. The catalysed reaction is cytidine(34) in elongator tRNA(Met) + acetate + ATP = N(4)-acetylcytidine(34) in elongator tRNA(Met) + AMP + diphosphate. Functionally, catalyzes the formation of N(4)-acetylcytidine (ac(4)C) at the wobble position of elongator tRNA(Met), using acetate and ATP as substrates. First activates an acetate ion to form acetyladenylate (Ac-AMP) and then transfers the acetyl group to tRNA to form ac(4)C34. The sequence is that of tRNA(Met) cytidine acetate ligase from Geobacillus sp. (strain WCH70).